A 345-amino-acid chain; its full sequence is 4-hydroxy-3-methylbut-2-en-1-yl diphosphate synthase (flavodoxin) (345 aa).

Cys271, Cys274, Cys306, and Glu313 together coordinate [4Fe-4S] cluster.

Belongs to the IspG family. It depends on [4Fe-4S] cluster as a cofactor.

The catalysed reaction is (2E)-4-hydroxy-3-methylbut-2-enyl diphosphate + oxidized [flavodoxin] + H2O + 2 H(+) = 2-C-methyl-D-erythritol 2,4-cyclic diphosphate + reduced [flavodoxin]. The protein operates within isoprenoid biosynthesis; isopentenyl diphosphate biosynthesis via DXP pathway; isopentenyl diphosphate from 1-deoxy-D-xylulose 5-phosphate: step 5/6. Converts 2C-methyl-D-erythritol 2,4-cyclodiphosphate (ME-2,4cPP) into 1-hydroxy-2-methyl-2-(E)-butenyl 4-diphosphate. The sequence is that of 4-hydroxy-3-methylbut-2-en-1-yl diphosphate synthase (flavodoxin) from Haemophilus influenzae (strain PittEE).